The chain runs to 184 residues: Mediator of RNA polymerase II transcription subunit 28 (184 aa).

Positions 77–105 form a coiled coil; the sequence is LLKEENFDLKQEIARKDELIRKHYEKIES.

This sequence belongs to the Mediator complex subunit 28 family. As to quaternary structure, component of the Mediator complex.

It is found in the nucleus. Its function is as follows. Component of the Mediator complex, a coactivator involved in the regulated transcription of nearly all RNA polymerase II-dependent genes. Mediator functions as a bridge to convey information from gene-specific regulatory proteins to the basal RNA polymerase II transcription machinery. Mediator is recruited to promoters by direct interactions with regulatory proteins and serves as a scaffold for the assembly of a functional preinitiation complex with RNA polymerase II and the general transcription factors. The protein is Mediator of RNA polymerase II transcription subunit 28 (MED28) of Aedes aegypti (Yellowfever mosquito).